The chain runs to 323 residues: tRNA U34 carboxymethyltransferase (323 aa).

Residues Lys91, Trp105, Lys110, Gly130, 152-154 (DPT), 181-182 (IE), Met196, Tyr200, and Arg315 contribute to the carboxy-S-adenosyl-L-methionine site.

The protein belongs to the class I-like SAM-binding methyltransferase superfamily. CmoB family. As to quaternary structure, homotetramer.

The catalysed reaction is carboxy-S-adenosyl-L-methionine + 5-hydroxyuridine(34) in tRNA = 5-carboxymethoxyuridine(34) in tRNA + S-adenosyl-L-homocysteine + H(+). Its function is as follows. Catalyzes carboxymethyl transfer from carboxy-S-adenosyl-L-methionine (Cx-SAM) to 5-hydroxyuridine (ho5U) to form 5-carboxymethoxyuridine (cmo5U) at position 34 in tRNAs. The chain is tRNA U34 carboxymethyltransferase from Escherichia coli (strain K12 / MC4100 / BW2952).